The primary structure comprises 563 residues: Arginine--tRNA ligase (563 aa).

Positions 134-144 (ANPTGLLHMGN) match the 'HIGH' region motif.

The protein belongs to the class-I aminoacyl-tRNA synthetase family. As to quaternary structure, monomer.

The protein resides in the cytoplasm. The catalysed reaction is tRNA(Arg) + L-arginine + ATP = L-arginyl-tRNA(Arg) + AMP + diphosphate. The protein is Arginine--tRNA ligase of Heliobacterium modesticaldum (strain ATCC 51547 / Ice1).